The primary structure comprises 249 residues: ATP synthase subunit a, chloroplastic (249 aa).

A run of 5 helical transmembrane segments spans residues 40–60 (QVLITSWVVIAILLGSAVLVV), 97–117 (VPFIGTLFLFIFVSNWSGALL), 136–156 (INTTVALALLTSVAYFYAGLS), 201–221 (LVVVVLVSLVPLVVPIPVMFL), and 222–242 (GLFTSGIQALIFATLAAAYIG).

This sequence belongs to the ATPase A chain family. F-type ATPases have 2 components, CF(1) - the catalytic core - and CF(0) - the membrane proton channel. CF(1) has five subunits: alpha(3), beta(3), gamma(1), delta(1), epsilon(1). CF(0) has four main subunits: a, b, b' and c.

The protein resides in the plastid. It is found in the chloroplast thylakoid membrane. Key component of the proton channel; it plays a direct role in the translocation of protons across the membrane. This is ATP synthase subunit a, chloroplastic from Aethionema grandiflorum (Persian stone-cress).